Reading from the N-terminus, the 121-residue chain is UPF0102 protein BDI_2565 (121 aa).

This sequence belongs to the UPF0102 family.

In Parabacteroides distasonis (strain ATCC 8503 / DSM 20701 / CIP 104284 / JCM 5825 / NCTC 11152), this protein is UPF0102 protein BDI_2565.